A 327-amino-acid polypeptide reads, in one-letter code: GMP reductase (327 aa).

Cysteine 175 acts as the Thioimidate intermediate in catalysis. Residue 204–227 (IIADGGIRTHGDIAKSVRFGASMV) coordinates NADP(+).

The protein belongs to the IMPDH/GMPR family. GuaC type 2 subfamily.

The enzyme catalyses IMP + NH4(+) + NADP(+) = GMP + NADPH + 2 H(+). In terms of biological role, catalyzes the irreversible NADPH-dependent deamination of GMP to IMP. It functions in the conversion of nucleobase, nucleoside and nucleotide derivatives of G to A nucleotides, and in maintaining the intracellular balance of A and G nucleotides. This chain is GMP reductase, found in Lysinibacillus sphaericus (strain C3-41).